The chain runs to 85 residues: MPRTKKVGSAGRFGPRYGLKIRRRVAAVEEKMRQKHTCPVCGRKAVRRISTGIWQCQKCGATFAGGAYLPATPAGRIAKRGISSP.

The C4-type zinc-finger motif lies at 38-59 (CPVCGRKAVRRISTGIWQCQKC).

This sequence belongs to the eukaryotic ribosomal protein eL43 family. It depends on Zn(2+) as a cofactor.

The protein is Large ribosomal subunit protein eL43 of Thermococcus sibiricus (strain DSM 12597 / MM 739).